We begin with the raw amino-acid sequence, 209 residues long: Uracil phosphoribosyltransferase (209 aa).

Residues Arg-79, Arg-104, and 131 to 139 contribute to the 5-phospho-alpha-D-ribose 1-diphosphate site; that span reads DPMLATGGS. Uracil contacts are provided by residues Ile-194 and 199 to 201; that span reads GDA. Position 200 (Asp-200) interacts with 5-phospho-alpha-D-ribose 1-diphosphate.

The protein belongs to the UPRTase family. Requires Mg(2+) as cofactor.

It catalyses the reaction UMP + diphosphate = 5-phospho-alpha-D-ribose 1-diphosphate + uracil. It functions in the pathway pyrimidine metabolism; UMP biosynthesis via salvage pathway; UMP from uracil: step 1/1. Its activity is regulated as follows. Allosterically activated by GTP. Its function is as follows. Catalyzes the conversion of uracil and 5-phospho-alpha-D-ribose 1-diphosphate (PRPP) to UMP and diphosphate. The chain is Uracil phosphoribosyltransferase from Clostridium perfringens (strain ATCC 13124 / DSM 756 / JCM 1290 / NCIMB 6125 / NCTC 8237 / Type A).